We begin with the raw amino-acid sequence, 339 residues long: MAQEIYDIAIIGGGPVGMFAAFYAGLRDTKVILLESLATLGGQVTSLYPEKTILDVAGFSATKGTDFIAALSQQLQRFPVDIRTQTTVVNLEKSGNLFTVTTNNGTFIQAKTVIVATGKGAFEPRKIQVAGVDNLVGQGVHYFIKNKHDFDNHHIAIAGGGDSAVDMATMLSHIAAETTLIHRRDNFRAMEQSVKTLMASKVIRETPKKILSVSKQPDGRLKLRLAHVKDNQQVNDIIVDDLIINYGFISENKTIQAWAVQPKLAGQVFAVNQTLETNVPGLFVIGDASHYIGKADLIAIGLGEAPSAVNAAIRCFDPNRGGPGHSSSMVLKDTIVRND.

FAD-binding residues include E35, Q43, Y48, V88, F122, D287, and S327.

Belongs to the ferredoxin--NADP reductase type 2 family. As to quaternary structure, homodimer. It depends on FAD as a cofactor.

The catalysed reaction is 2 reduced [2Fe-2S]-[ferredoxin] + NADP(+) + H(+) = 2 oxidized [2Fe-2S]-[ferredoxin] + NADPH. This is Ferredoxin--NADP reductase from Leuconostoc citreum (strain KM20).